The chain runs to 159 residues: Cyanate hydratase (159 aa).

Active-site residues include arginine 103, glutamate 106, and serine 129.

The protein belongs to the cyanase family.

The enzyme catalyses cyanate + hydrogencarbonate + 3 H(+) = NH4(+) + 2 CO2. Its function is as follows. Catalyzes the reaction of cyanate with bicarbonate to produce ammonia and carbon dioxide. This Blastomyces gilchristii (strain SLH14081) (Blastomyces dermatitidis) protein is Cyanate hydratase.